Reading from the N-terminus, the 511-residue chain is MKDLFWHLVGIATGLKILLIPAYHSTDFEVHRNWLAITHSLPLNQWYVDATSEWTLDYPPFFAYFEWLLSQVAKYVDPRMLVVDNLNYESKATVYFQRLSVIVTDLVYVLGVRSCLGSLGLGRDTQQFFAASMLLLLNVGLIFVDHIHFQYNGLLFGILLLSIGSLIRQRFLWSAFAFAVLLNFKHIFLYMAPAFGVYLLRFYCLEQASVVSAVGAVVKLLVVGLTPFAVSFGPFWQQLPQVLSRLFPFKRGLTHAYWAPNFWALYNAADKLAAGVLKVQDGGASTTSGLVQEVRHSVLPAITPPVTFALTALFMLPILVKLFRSAKKQSPLVFLRAVVLCGCSSFVFGWHVHEKAILMVLLPLCLLTLVNREDARYAYVLGIAGYFSLFPLLFDADLYIPRYSLYMSYVAMMYGQLYRIFPGFRGFHTLEWLYMLGFMAIPLYEHLLSFLLHLDQRLPFLPLLLTSVYSALGVLYFFGAYYLYALGISWGKVPIASSTSAAAVKRKRKTK.

11 helical membrane passes run 4-24, 94-112, 124-144, 151-171, 210-230, 300-320, 332-352, 356-370, 377-394, 432-452, and 469-491; these read LFWH…PAYH, VYFQ…VLGV, DTQQ…LIFV, YNGL…RQRF, VVSA…PFAV, PAIT…PILV, LVFL…GWHV, AILM…LTLV, YAYV…PLLF, WLYM…SFLL, and YSAL…ISWG.

Belongs to the ALG6/ALG8 glucosyltransferase family.

Its subcellular location is the endoplasmic reticulum membrane. The catalysed reaction is an alpha-D-Glc-(1-&gt;3)-alpha-D-Man-(1-&gt;2)-alpha-D-Man-(1-&gt;2)-alpha-D-Man-(1-&gt;3)-[alpha-D-Man-(1-&gt;2)-alpha-D-Man-(1-&gt;3)-[alpha-D-Man-(1-&gt;2)-alpha-D-Man-(1-&gt;6)]-alpha-D-Man-(1-&gt;6)]-beta-D-Man-(1-&gt;4)-beta-D-GlcNAc-(1-&gt;4)-alpha-D-GlcNAc-diphospho-di-trans,poly-cis-dolichol + a di-trans,poly-cis-dolichyl beta-D-glucosyl phosphate = an alpha-D-Glc-(1-&gt;3)-alpha-D-Glc-(1-&gt;3)-alpha-D-Man-(1-&gt;2)-alpha-D-Man-(1-&gt;2)-alpha-D-Man-(1-&gt;3)-[alpha-D-Man-(1-&gt;2)-alpha-D-Man-(1-&gt;3)-[alpha-D-Man-(1-&gt;2)-alpha-D-Man-(1-&gt;6)]-alpha-D-Man-(1-&gt;6)]-beta-D-Man-(1-&gt;4)-beta-D-GlcNAc-(1-&gt;4)-alpha-D-GlcNAc-diphospho-di-trans,poly-cis-dolichol + a di-trans,poly-cis-dolichyl phosphate + H(+). Its pathway is protein modification; protein glycosylation. Functionally, adds the second glucose residue to the lipid-linked oligosaccharide precursor for N-linked glycosylation. Transfers glucose from dolichyl phosphate glucose (Dol-P-Glc) onto the lipid-linked oligosaccharide Glc(1)Man(9)GlcNAc(2)-PP-Dol. Functions in developmental processes such as germband extension, the apical constriction of mesoderm precursor cells and ventral furrow formation in early embryogenesis prior to gastrulation. Involved in the glycosylation and intracellular distribution of shg (E-cadherin). Function in cell intercalation in the lateral epidermis during germband extension may be due to its effect on shg. The chain is Probable dolichyl pyrophosphate Glc1Man9GlcNAc2 alpha-1,3-glucosyltransferase from Drosophila melanogaster (Fruit fly).